We begin with the raw amino-acid sequence, 238 residues long: Putative pectate lyase X (238 aa).

The N-terminal stretch at 1 to 22 (MKYLLPTAAAGLLLLAAQPAMA) is a signal peptide. Ca(2+) is bound by residues aspartate 153, glutamate 188, and aspartate 192.

The protein belongs to the polysaccharide lyase 1 family. Requires Ca(2+) as cofactor.

The catalysed reaction is Eliminative cleavage of (1-&gt;4)-alpha-D-galacturonan to give oligosaccharides with 4-deoxy-alpha-D-galact-4-enuronosyl groups at their non-reducing ends.. It participates in glycan metabolism; pectin degradation; 2-dehydro-3-deoxy-D-gluconate from pectin: step 2/5. Its function is as follows. Involved in maceration and soft-rotting of plant tissue. In Pectobacterium carotovorum (Erwinia carotovora), this protein is Putative pectate lyase X (PEL X).